The following is a 153-amino-acid chain: Large ribosomal subunit protein uL13 (153 aa).

The protein belongs to the universal ribosomal protein uL13 family. In terms of assembly, part of the 50S ribosomal subunit.

This protein is one of the early assembly proteins of the 50S ribosomal subunit, although it is not seen to bind rRNA by itself. It is important during the early stages of 50S assembly. The protein is Large ribosomal subunit protein uL13 of Xanthobacter autotrophicus (strain ATCC BAA-1158 / Py2).